A 292-amino-acid polypeptide reads, in one-letter code: Probable 2-(5''-triphosphoribosyl)-3'-dephosphocoenzyme-A synthase (292 aa).

This sequence belongs to the CitG/MdcB family.

The enzyme catalyses 3'-dephospho-CoA + ATP = 2'-(5''-triphospho-alpha-D-ribosyl)-3'-dephospho-CoA + adenine. In terms of biological role, involved in the formation of 2-(5''-phosphoribosyl)-3'-dephosphocoenzyme-A, the prosthetic group of the acyl-carrier protein of the malonate decarboxylase. In Azotobacter vinelandii (strain DJ / ATCC BAA-1303), this protein is Probable 2-(5''-triphosphoribosyl)-3'-dephosphocoenzyme-A synthase.